We begin with the raw amino-acid sequence, 461 residues long: L-serine dehydratase (461 aa).

This sequence belongs to the iron-sulfur dependent L-serine dehydratase family. [4Fe-4S] cluster is required as a cofactor.

The catalysed reaction is L-serine = pyruvate + NH4(+). The protein operates within carbohydrate biosynthesis; gluconeogenesis. This chain is L-serine dehydratase (sdaA), found in Mycobacterium bovis (strain ATCC BAA-935 / AF2122/97).